The chain runs to 332 residues: Putative ketol-acid reductoisomerase 3 (332 aa).

The KARI N-terminal Rossmann domain occupies 1-182; sequence MDKTVLDASL…AIPGGIAVIS (182 aa). The 147-residue stretch at 183-329 folds into the KARI C-terminal knotted domain; it reads SFEEEALLDL…KELYKILRRK (147 aa).

This sequence belongs to the ketol-acid reductoisomerase family.

It carries out the reaction (2R)-2,3-dihydroxy-3-methylbutanoate + NADP(+) = (2S)-2-acetolactate + NADPH + H(+). The catalysed reaction is (2R,3R)-2,3-dihydroxy-3-methylpentanoate + NADP(+) = (S)-2-ethyl-2-hydroxy-3-oxobutanoate + NADPH + H(+). Its pathway is amino-acid biosynthesis; L-isoleucine biosynthesis; L-isoleucine from 2-oxobutanoate: step 2/4. The protein operates within amino-acid biosynthesis; L-valine biosynthesis; L-valine from pyruvate: step 2/4. This Saccharolobus solfataricus (strain ATCC 35092 / DSM 1617 / JCM 11322 / P2) (Sulfolobus solfataricus) protein is Putative ketol-acid reductoisomerase 3 (ilvC3).